The primary structure comprises 861 residues: MNPIDTDDLEKHTPMMRQYLTMKAEHHDMLLFYRMGDFYELFYDDAKRASELLGISLTARGKSGGDPIPMAGIPYHAVEGYLAKLVQIGQSVAICEQIGDPATSKGPVERKVVRIVTPGTLTDEALLQERQDNLLAAVYQGKVGFGYATLDVSSGRFVIAELETKESLEAELQRTNPVEILYSEDFGAMELLHHFKGKRRRPEWEFDYDTSIKLLLAQFGTKDLHGFGITDARLSLQAAGCLMQYVKDTQRTALPHINAITRFNQTDTIVLDAATRRNLELTQNLSGGRDNTLAAVLDNTATAMGSRMLQRWIHQPLRDHAQIFARQTAVNELLETTAHESLHEQLKALGDIERIMARLALRTARPRDFARLRQALNLLPKLQQSLAQLSAPHTVKLGQLLGEFPEEQQLLERAIVDNPPMLIRDGGVIREGYNAELDEWRGLSEGATDYLVQLEAREKERTGIATLKVGYNRVHGYYIEVSRLQSQQVPLNYQRRQTLKNMERYITPELKEYEEKVLSSQGKALALEKQLWDELFDLILPKLHELQAFARAAAELDVLSNFAERAETLGYTCPELSSEIGVKIEAGRHPVVERVSQTPFIANPVTLYNQRRMLIVTGPNMGGKSTYMRQVALITLMAHIGCFVPADRAIIGPIDRIFTRIGASDDLASGRSTFMVEMTETANILHNATAQSLVLMDEIGRGTSTYDGLSLAWSAAEYLAQQVGAMTLFATHYFELTQLPELMAGVYNVHLDAIEHEDTIAFMHAVQEGAASKSYGLQVAALAGVPARVIKAAKHKLHQLESRDHQVEGVNVNGTRAPIQTLLALPEPVENPAVSKLKAINPDNLTPKQALDLLYELKRLS.

Residue 618–625 (GPNMGGKS) coordinates ATP.

Belongs to the DNA mismatch repair MutS family.

This protein is involved in the repair of mismatches in DNA. It is possible that it carries out the mismatch recognition step. This protein has a weak ATPase activity. In Shewanella sp. (strain MR-4), this protein is DNA mismatch repair protein MutS.